The chain runs to 428 residues: Histidinol dehydrogenase (428 aa).

NAD(+) contacts are provided by tyrosine 124, glutamine 186, and asparagine 209. Serine 233, glutamine 255, and histidine 258 together coordinate substrate. Residues glutamine 255 and histidine 258 each coordinate Zn(2+). Catalysis depends on proton acceptor residues glutamate 322 and histidine 323. 4 residues coordinate substrate: histidine 323, aspartate 356, glutamate 410, and histidine 415. Aspartate 356 is a binding site for Zn(2+). Position 415 (histidine 415) interacts with Zn(2+).

This sequence belongs to the histidinol dehydrogenase family. Zn(2+) serves as cofactor.

It carries out the reaction L-histidinol + 2 NAD(+) + H2O = L-histidine + 2 NADH + 3 H(+). The protein operates within amino-acid biosynthesis; L-histidine biosynthesis; L-histidine from 5-phospho-alpha-D-ribose 1-diphosphate: step 9/9. In terms of biological role, catalyzes the sequential NAD-dependent oxidations of L-histidinol to L-histidinaldehyde and then to L-histidine. In Bacteroides fragilis (strain YCH46), this protein is Histidinol dehydrogenase.